Here is a 334-residue protein sequence, read N- to C-terminus: 4-hydroxyproline 2-epimerase (334 aa).

The active-site Proton acceptor is cysteine 90. Substrate contacts are provided by residues 91–92 (GH), histidine 223, and aspartate 249. Residue cysteine 253 is the Proton donor of the active site. Residue 254–255 (GT) participates in substrate binding.

It belongs to the proline racemase family. As to quaternary structure, homodimer.

The catalysed reaction is trans-4-hydroxy-L-proline = cis-4-hydroxy-D-proline. Its function is as follows. Catalyzes the epimerization of trans-4-hydroxy-L-proline (t4LHyp) to cis-4-hydroxy-D-proline (c4DHyp). Is likely involved in a degradation pathway that converts t4LHyp to alpha-ketoglutarate, which would allow P.denitrificans to grow on t4LHyp as a sole carbon source. Also seems to be involved in an alternative catabolic pathway that degrades trans-4-hydroxy-L-proline betaine (tHyp-B) to alpha-ketoglutarate; this pathway would permit the utilization of tHyp-B as a sole carbon and nitrogen source. This chain is 4-hydroxyproline 2-epimerase (hypF), found in Paracoccus denitrificans (strain Pd 1222).